We begin with the raw amino-acid sequence, 101 residues long: DNA-binding protein Fis (101 aa).

A DNA-binding region (H-T-H motif) is located at residues 77 to 96 (QTRAANMLGINRGTLRKKLK).

Belongs to the transcriptional regulatory Fis family. As to quaternary structure, homodimer.

Its function is as follows. Activates ribosomal RNA transcription. Plays a direct role in upstream activation of rRNA promoters. This is DNA-binding protein Fis from Shewanella pealeana (strain ATCC 700345 / ANG-SQ1).